Consider the following 122-residue polypeptide: Small ribosomal subunit protein uS13 (122 aa).

The tract at residues 97 to 122 (PVRGQRTHTNAKTRKGRSRLPIAGKK) is disordered.

The protein belongs to the universal ribosomal protein uS13 family. Part of the 30S ribosomal subunit. Forms a loose heterodimer with protein S19. Forms two bridges to the 50S subunit in the 70S ribosome.

Functionally, located at the top of the head of the 30S subunit, it contacts several helices of the 16S rRNA. In the 70S ribosome it contacts the 23S rRNA (bridge B1a) and protein L5 of the 50S subunit (bridge B1b), connecting the 2 subunits; these bridges are implicated in subunit movement. Contacts the tRNAs in the A and P-sites. The protein is Small ribosomal subunit protein uS13 of Wolbachia pipientis wMel.